A 99-amino-acid chain; its full sequence is Protein Tat (99 aa).

The segment at 1–20 (MELVDPNLDPWNHPGSQPTT) is disordered. The interval 1-24 (MELVDPNLDPWNHPGSQPTTPCTR) is interaction with human CREBBP. The transactivation stretch occupies residues 1–48 (MELVDPNLDPWNHPGSQPTTPCTRCYCKWCCFHCYWCFTTKGLGISYG). Cysteine 22, cysteine 25, and cysteine 27 together coordinate Zn(2+). The segment at 22 to 37 (CTRCYCKWCCFHCYWC) is cysteine-rich. The residue at position 28 (lysine 28) is an N6-acetyllysine; by host PCAF. Zn(2+) contacts are provided by cysteine 30, histidine 33, cysteine 34, and cysteine 37. Residues 38–48 (FTTKGLGISYG) form a core region. Residues 48–99 (GRKKRRQRPRTPQSSQIHQDFVPKQPISQARGNPTGPKESKKEVESKAKTDP) form a disordered region. The Nuclear localization signal, RNA-binding (TAR), and protein transduction motif lies at 49-57 (RKKRRQRPR). Positions 49–86 (RKKRRQRPRTPQSSQIHQDFVPKQPISQARGNPTGPKE) are interaction with the host capping enzyme RNGTT. An N6-acetyllysine; by host EP300 and GCN5L2 mark is found at lysine 50 and lysine 51. Asymmetric dimethylarginine; by host PRMT6 occurs at positions 52 and 53. A Glycyl lysine isopeptide (Lys-Gly) (interchain with G-Cter in ubiquitin) cross-link involves residue lysine 71. Residues 85–99 (KESKKEVESKAKTDP) show a composition bias toward basic and acidic residues.

It belongs to the lentiviruses Tat family. In terms of assembly, interacts with host CCNT1. Associates with the P-TEFb complex composed at least of Tat, P-TEFb (CDK9 and CCNT1), TAR RNA, RNA Pol II. Recruits the HATs CREBBP, TAF1/TFIID, EP300, PCAF and GCN5L2. Interacts with host KAT5/Tip60; this interaction targets the latter to degradation. Interacts with the host deacetylase SIRT1. Interacts with host capping enzyme RNGTT; this interaction stimulates RNGTT. Binds to host KDR, and to the host integrins ITGAV/ITGB3 and ITGA5/ITGB1. Interacts with host KPNB1/importin beta-1 without previous binding to KPNA1/importin alpha-1. Interacts with EIF2AK2. Interacts with host nucleosome assembly protein NAP1L1; this interaction may be required for the transport of Tat within the nucleus, since the two proteins interact at the nuclear rim. Interacts with host C1QBP/SF2P32; this interaction involves lysine-acetylated Tat. Interacts with the host chemokine receptors CCR2, CCR3 and CXCR4. Interacts with host DPP4/CD26; this interaction may trigger an anti-proliferative effect. Interacts with host LDLR. Interacts with the host extracellular matrix metalloproteinase MMP1. Interacts with host PRMT6; this interaction mediates Tat's methylation. Interacts with, and is ubiquitinated by MDM2/Hdm2. Interacts with host PSMC3 and HTATIP2. Interacts with STAB1; this interaction may overcome SATB1-mediated repression of IL2 and IL2RA (interleukin) in T cells by binding to the same domain than HDAC1. Interacts (when acetylated) with human CDK13, thereby increasing HIV-1 mRNA splicing and promoting the production of the doubly spliced HIV-1 protein Nef. Interacts with host TBP; this interaction modulates the activity of transcriptional pre-initiation complex. Interacts with host RELA. Interacts with host PLSCR1; this interaction negatively regulates Tat transactivation activity by altering its subcellular distribution. Asymmetrical arginine methylation by host PRMT6 seems to diminish the transactivation capacity of Tat and affects the interaction with host CCNT1. Post-translationally, acetylation by EP300, CREBBP, GCN5L2/GCN5 and PCAF regulates the transactivation activity of Tat. EP300-mediated acetylation of Lys-50 promotes dissociation of Tat from the TAR RNA through the competitive binding to PCAF's bromodomain. In addition, the non-acetylated Tat's N-terminus can also interact with PCAF. PCAF-mediated acetylation of Lys-28 enhances Tat's binding to CCNT1. Lys-50 is deacetylated by SIRT1. In terms of processing, polyubiquitination by host MDM2 does not target Tat to degradation, but activates its transactivation function and fosters interaction with CCNT1 and TAR RNA. Phosphorylated by EIF2AK2 on serine and threonine residues adjacent to the basic region important for TAR RNA binding and function. Phosphorylation of Tat by EIF2AK2 is dependent on the prior activation of EIF2AK2 by dsRNA.

The protein localises to the host nucleus. The protein resides in the host nucleolus. Its subcellular location is the host cytoplasm. It is found in the secreted. Transcriptional activator that increases RNA Pol II processivity, thereby increasing the level of full-length viral transcripts. Recognizes a hairpin structure at the 5'-LTR of the nascent viral mRNAs referred to as the transactivation responsive RNA element (TAR) and recruits the cyclin T1-CDK9 complex (P-TEFb complex) that will in turn hyperphosphorylate the RNA polymerase II to allow efficient elongation. The CDK9 component of P-TEFb and other Tat-activated kinases hyperphosphorylate the C-terminus of RNA Pol II that becomes stabilized and much more processive. Other factors such as HTATSF1/Tat-SF1, SUPT5H/SPT5, and HTATIP2 are also important for Tat's function. Besides its effect on RNA Pol II processivity, Tat induces chromatin remodeling of proviral genes by recruiting the histone acetyltransferases (HATs) CREBBP, EP300 and PCAF to the chromatin. This also contributes to the increase in proviral transcription rate, especially when the provirus integrates in transcriptionally silent region of the host genome. To ensure maximal activation of the LTR, Tat mediates nuclear translocation of NF-kappa-B by interacting with host RELA. Through its interaction with host TBP, Tat may also modulate transcription initiation. Tat can reactivate a latently infected cell by penetrating in it and transactivating its LTR promoter. In the cytoplasm, Tat is thought to act as a translational activator of HIV-1 mRNAs. Functionally, extracellular circulating Tat can be endocytosed by surrounding uninfected cells via the binding to several surface receptors such as CD26, CXCR4, heparan sulfate proteoglycans (HSPG) or LDLR. Neurons are rarely infected, but they internalize Tat via their LDLR. Through its interaction with nuclear HATs, Tat is potentially able to control the acetylation-dependent cellular gene expression. Modulates the expression of many cellular genes involved in cell survival, proliferation or in coding for cytokines or cytokine receptors. Tat plays a role in T-cell and neurons apoptosis. Tat induced neurotoxicity and apoptosis probably contribute to neuroAIDS. Circulating Tat also acts as a chemokine-like and/or growth factor-like molecule that binds to specific receptors on the surface of the cells, affecting many cellular pathways. In the vascular system, Tat binds to ITGAV/ITGB3 and ITGA5/ITGB1 integrins dimers at the surface of endothelial cells and competes with bFGF for heparin-binding sites, leading to an excess of soluble bFGF. In Homo sapiens (Human), this protein is Protein Tat.